The sequence spans 634 residues: Chaperone protein DnaK (634 aa).

Residue T197 is modified to Phosphothreonine; by autocatalysis. Basic and acidic residues predominate over residues 515 to 528 (LHKEDDKKRKESVD). 2 disordered regions span residues 515–536 (LHKEDDKKRKESVDARNGADAI) and 595–634 (YKAASAGKNAGGTAGGNGNAGSNGNSGAKKDDDVIDAEVE). The span at 603 to 615 (NAGGTAGGNGNAG) shows a compositional bias: gly residues.

Belongs to the heat shock protein 70 family.

Functionally, acts as a chaperone. This chain is Chaperone protein DnaK, found in Campylobacter hominis (strain ATCC BAA-381 / DSM 21671 / CCUG 45161 / LMG 19568 / NCTC 13146 / CH001A).